Consider the following 426-residue polypeptide: Serine--tRNA ligase (426 aa).

The interval 36 to 66 (KRKHLQERTQDLQSQRNTISKEIGQKKAKGE) is disordered. A compositionally biased stretch (polar residues) spans 46 to 55 (DLQSQRNTIS). 233 to 235 (TAE) is an L-serine binding site. 264 to 266 (RSE) contacts ATP. Position 287 (glutamate 287) interacts with L-serine. 351 to 354 (EISS) is a binding site for ATP. L-serine is bound at residue serine 387.

Belongs to the class-II aminoacyl-tRNA synthetase family. Type-1 seryl-tRNA synthetase subfamily. Homodimer. The tRNA molecule binds across the dimer.

Its subcellular location is the cytoplasm. The enzyme catalyses tRNA(Ser) + L-serine + ATP = L-seryl-tRNA(Ser) + AMP + diphosphate + H(+). It catalyses the reaction tRNA(Sec) + L-serine + ATP = L-seryl-tRNA(Sec) + AMP + diphosphate + H(+). The protein operates within aminoacyl-tRNA biosynthesis; selenocysteinyl-tRNA(Sec) biosynthesis; L-seryl-tRNA(Sec) from L-serine and tRNA(Sec): step 1/1. Catalyzes the attachment of serine to tRNA(Ser). Is also able to aminoacylate tRNA(Sec) with serine, to form the misacylated tRNA L-seryl-tRNA(Sec), which will be further converted into selenocysteinyl-tRNA(Sec). The sequence is that of Serine--tRNA ligase from Francisella tularensis subsp. holarctica (strain FTNF002-00 / FTA).